The following is a 1146-amino-acid chain: Error-prone DNA polymerase (1146 aa).

Disordered regions lie at residues 1–43 (MGWG…WSRK) and 154–178 (ATPE…PPGP). Basic and acidic residues predominate over residues 12-26 (ELERVLSGRPGRTDP).

Belongs to the DNA polymerase type-C family. DnaE2 subfamily.

It is found in the cytoplasm. The catalysed reaction is DNA(n) + a 2'-deoxyribonucleoside 5'-triphosphate = DNA(n+1) + diphosphate. Its function is as follows. DNA polymerase involved in damage-induced mutagenesis and translesion synthesis (TLS). It is not the major replicative DNA polymerase. This Nocardia farcinica (strain IFM 10152) protein is Error-prone DNA polymerase.